A 33-amino-acid polypeptide reads, in one-letter code: Brevinin-2JD (33 aa).

Residues cysteine 27 and cysteine 33 are joined by a disulfide bond.

In terms of tissue distribution, expressed by the skin glands.

The protein resides in the secreted. Functionally, has antibacterial activity against E.coli ATCC 25992 (MIC=38 uM), E.coli CIB 84492 (MIC=38 uM), S.aureus ATCC 25923 (MIC=19 uM) and S.aureus CIB 85462 (MIC=19 uM). Has antifungal activity against C.albicans (MIC=19 uM). Has weak hemolytic activity against rabbit erythrocytes. In Odorrana jingdongensis (Jingdong frog), this protein is Brevinin-2JD.